The chain runs to 314 residues: Hydrolase 4 (314 aa).

Residues 73-75 (HGA) carry the Involved in the stabilization of the negatively charged intermediate by the formation of the oxyanion hole motif. Residues Ser-165 and Asp-260 contribute to the active site.

It belongs to the 'GDXG' lipolytic enzyme family.

Its pathway is alkaloid biosynthesis. Component of the seco-iridoid and derivatives monoterpenoid indole alkaloids (MIAs, e.g. vincadifformine) biosynthesis pathway. Catalyzes the conversion of O-acetylstemmadenine (OAS) to vincadifformine. May also trigger the formation of additional unknown MIAs. The polypeptide is Hydrolase 4 (Catharanthus roseus (Madagascar periwinkle)).